The following is a 240-amino-acid chain: Uridylate kinase (240 aa).

An ATP-binding site is contributed by 9–12; sequence KLSG. UMP is bound at residue Gly51. The ATP site is built by Gly52 and Arg56. Residues Asp71 and 132-139 contribute to the UMP site; that span reads TGNPFFTT. Positions 159, 165, and 168 each coordinate ATP.

This sequence belongs to the UMP kinase family. As to quaternary structure, homohexamer.

Its subcellular location is the cytoplasm. The enzyme catalyses UMP + ATP = UDP + ADP. The protein operates within pyrimidine metabolism; CTP biosynthesis via de novo pathway; UDP from UMP (UMPK route): step 1/1. Its activity is regulated as follows. Inhibited by UTP. Functionally, catalyzes the reversible phosphorylation of UMP to UDP. The sequence is that of Uridylate kinase from Synechococcus elongatus (strain ATCC 33912 / PCC 7942 / FACHB-805) (Anacystis nidulans R2).